The following is a 509-amino-acid chain: Probable cytosol aminopeptidase (509 aa).

2 residues coordinate Mn(2+): Lys277 and Asp282. Lys289 is a catalytic residue. 3 residues coordinate Mn(2+): Asp300, Asp359, and Glu361. Arg363 is a catalytic residue.

The protein belongs to the peptidase M17 family. It depends on Mn(2+) as a cofactor.

The protein localises to the cytoplasm. It catalyses the reaction Release of an N-terminal amino acid, Xaa-|-Yaa-, in which Xaa is preferably Leu, but may be other amino acids including Pro although not Arg or Lys, and Yaa may be Pro. Amino acid amides and methyl esters are also readily hydrolyzed, but rates on arylamides are exceedingly low.. It carries out the reaction Release of an N-terminal amino acid, preferentially leucine, but not glutamic or aspartic acids.. Presumably involved in the processing and regular turnover of intracellular proteins. Catalyzes the removal of unsubstituted N-terminal amino acids from various peptides. In Chloroherpeton thalassium (strain ATCC 35110 / GB-78), this protein is Probable cytosol aminopeptidase.